We begin with the raw amino-acid sequence, 198 residues long: Ribonuclease HII (198 aa).

The 189-residue stretch at 10 to 198 (HLVAGVDEVG…PVKRALGLVS (189 aa)) folds into the RNase H type-2 domain. The a divalent metal cation site is built by D16, E17, and D108.

The protein belongs to the RNase HII family. Mn(2+) serves as cofactor. It depends on Mg(2+) as a cofactor.

It is found in the cytoplasm. It catalyses the reaction Endonucleolytic cleavage to 5'-phosphomonoester.. Functionally, endonuclease that specifically degrades the RNA of RNA-DNA hybrids. This is Ribonuclease HII from Salmonella schwarzengrund (strain CVM19633).